Consider the following 486-residue polypeptide: 2-succinylbenzoate--CoA ligase (486 aa).

The protein belongs to the ATP-dependent AMP-binding enzyme family. MenE subfamily.

The enzyme catalyses 2-succinylbenzoate + ATP + CoA = 2-succinylbenzoyl-CoA + AMP + diphosphate. Its pathway is quinol/quinone metabolism; 1,4-dihydroxy-2-naphthoate biosynthesis; 1,4-dihydroxy-2-naphthoate from chorismate: step 5/7. The protein operates within quinol/quinone metabolism; menaquinone biosynthesis. Its function is as follows. Converts 2-succinylbenzoate (OSB) to 2-succinylbenzoyl-CoA (OSB-CoA). The polypeptide is 2-succinylbenzoate--CoA ligase (Bacillus pumilus (strain SAFR-032)).